An 805-amino-acid chain; its full sequence is Sucrose synthase (805 aa).

The segment at 275–752 is GT-B glycosyltransferase; it reads MVFNVVILSP…GLKRIQEKYT (478 aa).

This sequence belongs to the glycosyltransferase 1 family. Plant sucrose synthase subfamily.

The catalysed reaction is an NDP-alpha-D-glucose + D-fructose = a ribonucleoside 5'-diphosphate + sucrose + H(+). In terms of biological role, sucrose-cleaving enzyme that provides UDP-glucose and fructose for various metabolic pathways. The chain is Sucrose synthase from Solanum tuberosum (Potato).